The sequence spans 296 residues: Lipoyl synthase (296 aa).

Residues Cys-35, Cys-40, Cys-46, Cys-61, Cys-65, Cys-68, and Ser-274 each contribute to the [4Fe-4S] cluster site. Residues 47 to 263 (WSSKHVTVMI…KEAAYARGFL (217 aa)) enclose the Radical SAM core domain.

Belongs to the radical SAM superfamily. Lipoyl synthase family. Requires [4Fe-4S] cluster as cofactor.

The protein resides in the cytoplasm. It catalyses the reaction [[Fe-S] cluster scaffold protein carrying a second [4Fe-4S](2+) cluster] + N(6)-octanoyl-L-lysyl-[protein] + 2 oxidized [2Fe-2S]-[ferredoxin] + 2 S-adenosyl-L-methionine + 4 H(+) = [[Fe-S] cluster scaffold protein] + N(6)-[(R)-dihydrolipoyl]-L-lysyl-[protein] + 4 Fe(3+) + 2 hydrogen sulfide + 2 5'-deoxyadenosine + 2 L-methionine + 2 reduced [2Fe-2S]-[ferredoxin]. It participates in protein modification; protein lipoylation via endogenous pathway; protein N(6)-(lipoyl)lysine from octanoyl-[acyl-carrier-protein]: step 2/2. Catalyzes the radical-mediated insertion of two sulfur atoms into the C-6 and C-8 positions of the octanoyl moiety bound to the lipoyl domains of lipoate-dependent enzymes, thereby converting the octanoylated domains into lipoylated derivatives. The polypeptide is Lipoyl synthase (Neorickettsia sennetsu (strain ATCC VR-367 / Miyayama) (Ehrlichia sennetsu)).